We begin with the raw amino-acid sequence, 149 residues long: Protein GR6 (149 aa).

Expressed in fetus (aged from 7 to 8 weeks). Weakly expressed in lymphocytes.

The protein is Protein GR6 of Homo sapiens (Human).